Consider the following 215-residue polypeptide: 3-demethoxyubiquinol 3-hydroxylase (215 aa).

6 residues coordinate Fe cation: glutamate 64, glutamate 94, histidine 97, glutamate 146, glutamate 178, and histidine 181.

This sequence belongs to the COQ7 family. It depends on Fe cation as a cofactor.

Its subcellular location is the cell membrane. The enzyme catalyses a 5-methoxy-2-methyl-3-(all-trans-polyprenyl)benzene-1,4-diol + AH2 + O2 = a 3-demethylubiquinol + A + H2O. It functions in the pathway cofactor biosynthesis; ubiquinone biosynthesis. Its function is as follows. Catalyzes the hydroxylation of 2-nonaprenyl-3-methyl-6-methoxy-1,4-benzoquinol during ubiquinone biosynthesis. The polypeptide is 3-demethoxyubiquinol 3-hydroxylase (Pseudomonas fluorescens (strain Pf0-1)).